We begin with the raw amino-acid sequence, 93 residues long: MLTELEKALNSIIDVYHKYSLIKGNFHAVYRDDLKKLLETECPQYIRKKGADVWFKELDINTDGAVNFQEFLILVIKMGVAAHKKSHEESHKE.

2 consecutive EF-hand domains span residues 12 to 47 (IIDV…QYIR) and 46 to 81 (IRKK…MGVA). Residues H17 and H27 each coordinate Zn(2+). D33 is a binding site for Ca(2+). S-nitrosocysteine is present on C42. 4 residues coordinate Ca(2+): D59, N61, D63, and E70. 2 residues coordinate Zn(2+): H83 and H87.

The protein belongs to the S-100 family. Homodimer. Preferentially exists as a heterodimer or heterotetramer with S100A9 known as calprotectin (S100A8/A9). S100A8 interacts with AGER, ATP2A2 and with the heterodimeric complex formed by TLR4 and LY96. Interacts with GAPDH. Calprotectin (S100A8/9) interacts with CEACAM3 and tubulin filaments in a calcium-dependent manner. Heterotetrameric calprotectin (S100A8/A9) interacts with ANXA6 and associates with tubulin filaments in activated monocytes. S100A8 and calprotectin (S100A8/9) interact with NCF2/P67PHOX, RAC1 and RAC2. Calprotectin (S100A8/9) interacts with CYBA and CYBB. Calprotectin (S100A8/9) interacts with NOS2 to form the iNOS-S100A8/A9 transnitrosylase complex; induced by LDL(ox). Calprotectin (S100A8/9) interacts with CD69. As to expression, calprotectin (S100A8/9) is predominantly expressed in myeloid cells. Except for inflammatory conditions, the expression is restricted to a specific stage of myeloid differentiation since both proteins are expressed in circulating neutrophils and monocytes but are absent in normal tissue macrophages and lymphocytes. Under chronic inflammatory conditions, such as psoriasis and malignant disorders, also expressed in the epidermis. Found in high concentrations at local sites of inflammation or in the serum of patients with inflammatory diseases such as rheumatoid, cystic fibrosis, inflammatory bowel disease, Crohn's disease, giant cell arteritis, cystic fibrosis, Sjogren's syndrome, systemic lupus erythematosus, and progressive systemic sclerosis. Involved in the formation and deposition of amyloids in the aging prostate known as corpora amylacea inclusions. Strongly up-regulated in many tumors, including gastric, esophageal, colon, pancreatic, bladder, ovarian, thyroid, breast and skin cancers.

It is found in the secreted. The protein resides in the cytoplasm. It localises to the cytoskeleton. Its subcellular location is the cell membrane. Its activity is regulated as follows. Calprotectin (S100A8/A9) activity on TLR4 signaling is inhibited by paquinimod. In terms of biological role, S100A8 is a calcium- and zinc-binding protein which plays a prominent role in the regulation of inflammatory processes and immune response. It can induce neutrophil chemotaxis and adhesion. Predominantly found as calprotectin (S100A8/A9) which has a wide plethora of intra- and extracellular functions. The intracellular functions include: facilitating leukocyte arachidonic acid trafficking and metabolism, modulation of the tubulin-dependent cytoskeleton during migration of phagocytes and activation of the neutrophilic NADPH-oxidase. Also participates in regulatory T-cell differentiation together with CD69. Activates NADPH-oxidase by facilitating the enzyme complex assembly at the cell membrane, transferring arachidonic acid, an essential cofactor, to the enzyme complex and S100A8 contributes to the enzyme assembly by directly binding to NCF2/P67PHOX. The extracellular functions involve pro-inflammatory, antimicrobial, oxidant-scavenging and apoptosis-inducing activities. Its pro-inflammatory activity includes recruitment of leukocytes, promotion of cytokine and chemokine production, and regulation of leukocyte adhesion and migration. Acts as an alarmin or a danger associated molecular pattern (DAMP) molecule and stimulates innate immune cells via binding to pattern recognition receptors such as Toll-like receptor 4 (TLR4) and receptor for advanced glycation endproducts (AGER). Binding to TLR4 and AGER activates the MAP-kinase and NF-kappa-B signaling pathways resulting in the amplification of the pro-inflammatory cascade. Has antimicrobial activity towards bacteria and fungi and exerts its antimicrobial activity probably via chelation of Zn(2+) which is essential for microbial growth. Can induce cell death via autophagy and apoptosis and this occurs through the cross-talk of mitochondria and lysosomes via reactive oxygen species (ROS) and the process involves BNIP3. Can regulate neutrophil number and apoptosis by an anti-apoptotic effect; regulates cell survival via ITGAM/ITGB and TLR4 and a signaling mechanism involving MEK-ERK. Its role as an oxidant scavenger has a protective role in preventing exaggerated tissue damage by scavenging oxidants. Can act as a potent amplifier of inflammation in autoimmunity as well as in cancer development and tumor spread. The iNOS-S100A8/A9 transnitrosylase complex directs selective inflammatory stimulus-dependent S-nitrosylation of GAPDH and probably multiple targets such as ANXA5, EZR, MSN and VIM by recognizing a [IL]-x-C-x-x-[DE] motif; S100A8 seems to contribute to S-nitrosylation site selectivity. Its function is as follows. (Microbial infection) Upon infection by human coronavirus SARS-CoV-2, may induce expansion of aberrant immature neutrophils in a TLR4-dependent manner. The protein is Protein S100-A8 of Homo sapiens (Human).